The chain runs to 267 residues: Glucosamine-6-phosphate deaminase (267 aa).

Catalysis depends on Asp-72, which acts as the Proton acceptor; for enolization step. Asp-141 acts as the For ring-opening step in catalysis. The Proton acceptor; for ring-opening step role is filled by His-143. The active-site For ring-opening step is Glu-148.

This sequence belongs to the glucosamine/galactosamine-6-phosphate isomerase family. NagB subfamily. Homohexamer.

The enzyme catalyses alpha-D-glucosamine 6-phosphate + H2O = beta-D-fructose 6-phosphate + NH4(+). It participates in amino-sugar metabolism; N-acetylneuraminate degradation; D-fructose 6-phosphate from N-acetylneuraminate: step 5/5. Allosterically activated by N-acetylglucosamine 6-phosphate (GlcNAc6P). In terms of biological role, catalyzes the reversible isomerization-deamination of glucosamine 6-phosphate (GlcN6P) to form fructose 6-phosphate (Fru6P) and ammonium ion. This chain is Glucosamine-6-phosphate deaminase, found in Actinobacillus pleuropneumoniae serotype 5b (strain L20).